The primary structure comprises 142 residues: Large ribosomal subunit protein uL13 (142 aa).

Belongs to the universal ribosomal protein uL13 family. As to quaternary structure, part of the 50S ribosomal subunit.

Its function is as follows. This protein is one of the early assembly proteins of the 50S ribosomal subunit, although it is not seen to bind rRNA by itself. It is important during the early stages of 50S assembly. This chain is Large ribosomal subunit protein uL13, found in Cronobacter sakazakii (strain ATCC BAA-894) (Enterobacter sakazakii).